The sequence spans 466 residues: Putative ABC transporter ATP-binding protein MG065 (466 aa).

Residues Ile233 to Ile463 form the ABC transporter domain. Gly269 to Thr276 provides a ligand contact to ATP.

Belongs to the ABC transporter superfamily.

This is Putative ABC transporter ATP-binding protein MG065 from Mycoplasma genitalium (strain ATCC 33530 / DSM 19775 / NCTC 10195 / G37) (Mycoplasmoides genitalium).